The sequence spans 221 residues: 7-cyano-7-deazaguanine synthase (221 aa).

ATP is bound at residue 7–17; sequence LSGGMDSSTLA. Zn(2+) contacts are provided by cysteine 187, cysteine 195, cysteine 198, and cysteine 201.

This sequence belongs to the QueC family. Zn(2+) is required as a cofactor.

It catalyses the reaction 7-carboxy-7-deazaguanine + NH4(+) + ATP = 7-cyano-7-deazaguanine + ADP + phosphate + H2O + H(+). It functions in the pathway purine metabolism; 7-cyano-7-deazaguanine biosynthesis. In terms of biological role, catalyzes the ATP-dependent conversion of 7-carboxy-7-deazaguanine (CDG) to 7-cyano-7-deazaguanine (preQ(0)). The chain is 7-cyano-7-deazaguanine synthase from Methanosphaerula palustris (strain ATCC BAA-1556 / DSM 19958 / E1-9c).